A 461-amino-acid chain; its full sequence is Cysteine--tRNA ligase (461 aa).

Cys-28 is a Zn(2+) binding site. The 'HIGH' region motif lies at 30 to 40 (ITVYDLCHIGH). The Zn(2+) site is built by Cys-209, His-234, and Glu-238. A 'KMSKS' region motif is present at residues 266-270 (KMSKS). An ATP-binding site is contributed by Lys-269.

Belongs to the class-I aminoacyl-tRNA synthetase family. Monomer. Requires Zn(2+) as cofactor.

Its subcellular location is the cytoplasm. It catalyses the reaction tRNA(Cys) + L-cysteine + ATP = L-cysteinyl-tRNA(Cys) + AMP + diphosphate. This is Cysteine--tRNA ligase from Shigella boydii serotype 18 (strain CDC 3083-94 / BS512).